The chain runs to 285 residues: Small ribosomal subunit protein uS2 (285 aa).

Residues 262 to 285 form a disordered region; sequence NDDWNEDDTAPAAPGAASWGGAAF. Residues 271-285 are compositionally biased toward low complexity; sequence APAAPGAASWGGAAF.

The protein belongs to the universal ribosomal protein uS2 family. In terms of assembly, component of the small ribosomal subunit. Mature ribosomes consist of a small (40S) and a large (60S) subunit. The 40S subunit contains about 33 different proteins and 1 molecule of RNA (18S). The 60S subunit contains about 49 different proteins and 3 molecules of RNA (28S, 5.8S and 5S). Interacts with ribosomal protein S21.

The protein localises to the cytoplasm. Functionally, required for the assembly and/or stability of the 40S ribosomal subunit. Required for the processing of the 20S rRNA-precursor to mature 18S rRNA in a late step of the maturation of 40S ribosomal subunits. In Anopheles gambiae (African malaria mosquito), this protein is Small ribosomal subunit protein uS2.